The primary structure comprises 343 residues: N(4)-bis(aminopropyl)spermidine synthase (343 aa).

This sequence belongs to the branched-chain polyamine synthase family.

It is found in the cytoplasm. The catalysed reaction is 2 S-adenosyl 3-(methylsulfanyl)propylamine + spermidine = N(4)-bis(aminopropyl)spermidine + 2 S-methyl-5'-thioadenosine + 2 H(+). Its pathway is amine and polyamine biosynthesis. Its function is as follows. Involved in the biosynthesis of branched-chain polyamines, which support the growth of thermophiles under high-temperature conditions. Catalyzes the sequential condensation of spermidine with the aminopropyl groups of decarboxylated S-adenosylmethionines to produce N(4)-bis(aminopropyl)spermidine via N(4)-aminopropylspermidine. This is N(4)-bis(aminopropyl)spermidine synthase from Thermus thermophilus.